The chain runs to 572 residues: Mitochondrial distribution and morphology protein 34 (572 aa).

Residues 1 to 195 form the SMP-LTD domain; the sequence is MAFNFNWSPL…LPAIIHRLSL (195 aa). Disordered stretches follow at residues 210-239, 330-423, and 455-482; these read TQAEKAETANGEGPGQDPLASPPQDPVDAL, SASI…PLSP, and RDMGGPSSTSDPATQATQSEDTSATPRA. Polar residues predominate over residues 330 to 347; sequence SASIASMQTRSSTPSHTF. Over residues 358–370 the composition is skewed to basic residues; that stretch reads RHSKAHSRKRKKR. Positions 371-381 are enriched in basic and acidic residues; that stretch reads VVDLRRPKTTD. 2 stretches are compositionally biased toward polar residues: residues 387 to 400 and 460 to 480; these read SDESAFTESTSAPS and PSSTSDPATQATQSEDTSATP.

The protein belongs to the MDM34 family. As to quaternary structure, component of the ER-mitochondria encounter structure (ERMES) or MDM complex, composed of mmm1, mdm10, mdm12 and mdm34.

The protein resides in the mitochondrion outer membrane. In terms of biological role, component of the ERMES/MDM complex, which serves as a molecular tether to connect the endoplasmic reticulum (ER) and mitochondria. Components of this complex are involved in the control of mitochondrial shape and protein biogenesis, and function in nonvesicular lipid trafficking between the ER and mitochondria. Mdm34 is required for the interaction of the ER-resident membrane protein mmm1 and the outer mitochondrial membrane-resident beta-barrel protein mdm10. In Aspergillus clavatus (strain ATCC 1007 / CBS 513.65 / DSM 816 / NCTC 3887 / NRRL 1 / QM 1276 / 107), this protein is Mitochondrial distribution and morphology protein 34.